The chain runs to 91 residues: Small ribosomal subunit protein uS19 (91 aa).

It belongs to the universal ribosomal protein uS19 family.

Protein S19 forms a complex with S13 that binds strongly to the 16S ribosomal RNA. This Pseudomonas fluorescens (strain Pf0-1) protein is Small ribosomal subunit protein uS19.